A 248-amino-acid chain; its full sequence is PF03932 family protein CutC (248 aa).

The protein belongs to the CutC family. Homodimer.

The protein resides in the cytoplasm. The polypeptide is PF03932 family protein CutC (Salmonella typhimurium (strain LT2 / SGSC1412 / ATCC 700720)).